Reading from the N-terminus, the 702-residue chain is Polyribonucleotide nucleotidyltransferase (702 aa).

Residues Asp-485 and Asp-491 each contribute to the Mg(2+) site. One can recognise a KH domain in the interval 552 to 611; the sequence is PKTSTLQIDPEKIRDVIGAGGKVINKIIADTGVKIDIKEDGLVYVSSAESEGVKEAVKII. Residues 621–689 form the S1 motif domain; the sequence is GEIYLGKVTK…SQGRINLSRK (69 aa).

The protein belongs to the polyribonucleotide nucleotidyltransferase family. Requires Mg(2+) as cofactor.

It is found in the cytoplasm. The catalysed reaction is RNA(n+1) + phosphate = RNA(n) + a ribonucleoside 5'-diphosphate. Functionally, involved in mRNA degradation. Catalyzes the phosphorolysis of single-stranded polyribonucleotides processively in the 3'- to 5'-direction. The protein is Polyribonucleotide nucleotidyltransferase of Clostridium perfringens (strain SM101 / Type A).